Reading from the N-terminus, the 212-residue chain is Guanylate kinase (212 aa).

The Guanylate kinase-like domain occupies 14–192 (GTALVICAPS…AYDELRATYL (179 aa)). Position 21 to 28 (21 to 28 (APSGTGKT)) interacts with ATP.

Belongs to the guanylate kinase family.

The protein resides in the cytoplasm. It catalyses the reaction GMP + ATP = GDP + ADP. Essential for recycling GMP and indirectly, cGMP. This is Guanylate kinase from Lawsonia intracellularis (strain PHE/MN1-00).